Consider the following 312-residue polypeptide: Olfactory receptor 1F1 (312 aa).

At 1–25 (MSGTNQSSVSEFLLLGLSRQPQQQH) the chain is on the extracellular side. An N-linked (GlcNAc...) asparagine glycan is attached at N5. The chain crosses the membrane as a helical span at residues 26–49 (LLFVFFLSMYLATVLGNLLIILSV). Residues 50–57 (SIDSCLHT) are Cytoplasmic-facing. The helical transmembrane segment at 58 to 79 (PMYFFLSNLSFVDICFSFTTVP) threads the bilayer. Topologically, residues 80–100 (KMLANHILETQTISFCGCLTQ) are extracellular. C97 and C189 form a disulfide bridge. The chain crosses the membrane as a helical span at residues 101–120 (MYFVFMFVDMDNFLLAVMAY). Residues 121–139 (DHFVAVCHPLHYTAKMTHQ) lie on the Cytoplasmic side of the membrane. The helical transmembrane segment at 140-158 (LCALLVAGLWVVANLNVLL) threads the bilayer. The Extracellular segment spans residues 159-196 (HTLLMAPLSFCADNAITHFFCDVTPLLKLSCSDTHLNE). Residues 197–219 (VIILSEGALVMITPFLCILASYM) traverse the membrane as a helical segment. Residues 220-236 (HITCTVLKVPSTKGRWK) are Cytoplasmic-facing. The helical transmembrane segment at 237-259 (AFSTCGSHLAVVLLFYSTIIAVY) threads the bilayer. At 260–272 (FNPLSSHSAEKDT) the chain is on the extracellular side. The helical transmembrane segment at 273 to 292 (MATVLYTVVTPMLNPFIYSL) threads the bilayer. Residues 293-312 (RNRYLKGALKKVVGRVVFSV) are Cytoplasmic-facing.

This sequence belongs to the G-protein coupled receptor 1 family.

It is found in the cell membrane. Its function is as follows. Odorant receptor. The sequence is that of Olfactory receptor 1F1 (OR1F1) from Homo sapiens (Human).